A 188-amino-acid chain; its full sequence is Adrenodoxin, mitochondrial (188 aa).

Residues 1-64 constitute a mitochondrion transit peptide; sequence MAAAPGARLL…RPLSVSARAR (64 aa). The residue at position 67 (Ser-67) is a Phosphoserine. One can recognise a 2Fe-2S ferredoxin-type domain in the interval 69–175; sequence DKVTVHFKNR…NMTVRVPEAV (107 aa). Lys-70 carries the N6-acetyllysine; alternate modification. The residue at position 70 (Lys-70) is an N6-succinyllysine; alternate. [2Fe-2S] cluster contacts are provided by Cys-110, Cys-116, Cys-119, and Cys-156. Lys-162 is subject to N6-succinyllysine. Ser-181 is subject to Phosphoserine.

Belongs to the adrenodoxin/putidaredoxin family. As to quaternary structure, interacts with CYP11A1. [2Fe-2S] cluster serves as cofactor. In terms of tissue distribution, found in all tissues, most abundant in adrenals, ovaries and testes.

The protein localises to the mitochondrion matrix. Functionally, essential for the synthesis of various steroid hormones. Participates in the reduction of mitochondrial cytochrome P450 for steroidogenesis. Transfers electrons from adrenodoxin reductase to CYP11A1, a cytochrome P450 that catalyzes cholesterol side-chain cleavage. Does not form a ternary complex with adrenodoxin reductase and CYP11A1 but shuttles between the two enzymes to transfer electrons. In Rattus norvegicus (Rat), this protein is Adrenodoxin, mitochondrial (Fdx1).